A 375-amino-acid polypeptide reads, in one-letter code: Probable Na(+)/H(+) antiporter GerT (375 aa).

10 helical membrane-spanning segments follow: residues 27–47, 89–109, 112–132, 145–165, 183–203, 204–224, 226–246, 261–281, 288–308, and 350–370; these read PSVLGKLIVGIIIGPAVLGII, AGGIIFPFIGGYVTGLLFGLI, HAIFLGLLLCATSVSITVQTL, TILGAAVFDDVIVVILLAFVM, IIFFVSIVFIAWKVVPWIMKM, LVPLRVTEALISAALIICFSF, YYSEMMGIAGIIGAFAAGIAI, PIAYAIFVPVFFVSIGMEITF, LWFIIIMTLIAIFTKLIGSGL, and ENFTAIVIVVILTTIITPPLL.

It belongs to the monovalent cation:proton antiporter 2 (CPA2) transporter (TC 2.A.37) family.

The protein resides in the membrane. Its function is as follows. Contributes to the success of spore outgrowth from the germinated state during alkaline or Na(+) stress. Does not have a significant role in germination. This is Probable Na(+)/H(+) antiporter GerT (gerT) from Bacillus cereus.